The sequence spans 435 residues: Histidine--tRNA ligase (435 aa).

It belongs to the class-II aminoacyl-tRNA synthetase family.

It is found in the cytoplasm. The enzyme catalyses tRNA(His) + L-histidine + ATP = L-histidyl-tRNA(His) + AMP + diphosphate + H(+). The sequence is that of Histidine--tRNA ligase (hisS) from Aeropyrum pernix (strain ATCC 700893 / DSM 11879 / JCM 9820 / NBRC 100138 / K1).